The primary structure comprises 417 residues: Glutamyl-tRNA reductase (417 aa).

Residues 48-51 (TCNR), S100, 105-107 (EDQ), and Q111 each bind substrate. Residue C49 is the Nucleophile of the active site. Residue 180–185 (GAGETG) coordinates NADP(+).

This sequence belongs to the glutamyl-tRNA reductase family. In terms of assembly, homodimer.

The enzyme catalyses (S)-4-amino-5-oxopentanoate + tRNA(Glu) + NADP(+) = L-glutamyl-tRNA(Glu) + NADPH + H(+). The protein operates within porphyrin-containing compound metabolism; protoporphyrin-IX biosynthesis; 5-aminolevulinate from L-glutamyl-tRNA(Glu): step 1/2. Functionally, catalyzes the NADPH-dependent reduction of glutamyl-tRNA(Glu) to glutamate 1-semialdehyde (GSA). The sequence is that of Glutamyl-tRNA reductase from Methanothrix thermoacetophila (strain DSM 6194 / JCM 14653 / NBRC 101360 / PT) (Methanosaeta thermophila).